We begin with the raw amino-acid sequence, 312 residues long: Probable N-glycosylase/DNA lyase (312 aa).

The disordered stretch occupies residues 1 to 22; it reads MRIPVGDFDLEMTQRSGQTSQP. The segment covering 13–22 has biased composition (polar residues); that stretch reads TQRSGQTSQP. K235 is a catalytic residue.

It belongs to the type-1 OGG1 family.

The enzyme catalyses 2'-deoxyribonucleotide-(2'-deoxyribose 5'-phosphate)-2'-deoxyribonucleotide-DNA = a 3'-end 2'-deoxyribonucleotide-(2,3-dehydro-2,3-deoxyribose 5'-phosphate)-DNA + a 5'-end 5'-phospho-2'-deoxyribonucleoside-DNA + H(+). In terms of biological role, DNA repair enzyme that incises DNA at 8-oxoG residues. Excises 7,8-dihydro-8-oxoguanine and 2,6-diamino-4-hydroxy-5-N-methylformamidopyrimidine (FAPY) from damaged DNA. Has a beta-lyase activity that nicks DNA 3' to the lesion. The chain is Probable N-glycosylase/DNA lyase from Methanothermobacter thermautotrophicus (strain ATCC 29096 / DSM 1053 / JCM 10044 / NBRC 100330 / Delta H) (Methanobacterium thermoautotrophicum).